Consider the following 436-residue polypeptide: Magnesium transporter MRS2-B (436 aa).

Low complexity-rich tracts occupy residues Met1–Ala14 and Val29–Gly54. The disordered stretch occupies residues Met1–Leu60. Residues Leu176–Asp242 adopt a coiled-coil conformation. Transmembrane regions (helical) follow at residues Leu372–Gly392 and Trp408–Phe428. The Required for magnesium transport activity motif lies at Gly392–Asn394.

It belongs to the CorA metal ion transporter (MIT) (TC 1.A.35.5) family.

The protein localises to the membrane. Its function is as follows. Magnesium transporter that may mediate the influx of magnesium. This Oryza sativa subsp. indica (Rice) protein is Magnesium transporter MRS2-B (MRS2-B).